A 366-amino-acid polypeptide reads, in one-letter code: Peptide chain release factor 2 (366 aa).

Q246 carries the post-translational modification N5-methylglutamine.

This sequence belongs to the prokaryotic/mitochondrial release factor family. Post-translationally, methylated by PrmC. Methylation increases the termination efficiency of RF2.

It is found in the cytoplasm. In terms of biological role, peptide chain release factor 2 directs the termination of translation in response to the peptide chain termination codons UGA and UAA. The protein is Peptide chain release factor 2 of Frankia casuarinae (strain DSM 45818 / CECT 9043 / HFP020203 / CcI3).